The following is a 30-amino-acid chain: Cyclotide hyen-F (30 aa).

Positions 1–30 form a cross-link, cyclopeptide (Gly-Asn); that stretch reads GLPCGESCVYIPCISTVLGCSCSNKVCYRN. Cystine bridges form between Cys-4/Cys-20, Cys-8/Cys-22, and Cys-13/Cys-27.

Post-translationally, this is a cyclic peptide. In terms of tissue distribution, detected in seeds (at protein level).

In terms of biological role, probably participates in a plant defense mechanism. In Pigea enneasperma (Spade flower), this protein is Cyclotide hyen-F.